We begin with the raw amino-acid sequence, 180 residues long: Beta-lactoglobulin (180 aa).

The N-terminal stretch at Met1–Ala18 is a signal peptide. 3 disulfide bridges follow: Cys84–Cys178, Cys124–Cys137, and Cys124–Cys139.

Belongs to the calycin superfamily. Lipocalin family. Under physiological conditions beta-lactoglobulin exists as an equilibrium mixture of monomeric and dimeric forms. Interaction with LMBR1L is controversial. Post-translationally, alternate disulfide bonds occur in equal amounts. As to expression, synthesized in mammary gland and secreted in milk.

It is found in the secreted. Functionally, primary component of whey, it binds retinol and is probably involved in the transport of that molecule. The sequence is that of Beta-lactoglobulin (LGB) from Bubalus bubalis (Domestic water buffalo).